Here is a 638-residue protein sequence, read N- to C-terminus: Sodium- and chloride-dependent glycine transporter 1 (638 aa).

The tract at residues 1 to 30 (MAVAHGPVATSSPEQNGAVPSEATKKDQNL) is disordered. At 1-40 (MAVAHGPVATSSPEQNGAVPSEATKKDQNLTRGNWGNQIE) the chain is on the cytoplasmic side. 3 consecutive transmembrane segments (helical) span residues 41–61 (FVLT…FPYL), 68–88 (GAFM…LFFM), and 120–140 (VSTY…YYFF). Residues 141-217 (SSMTHVLPWA…LSDDIGDFGE (77 aa)) lie on the Extracellular side of the membrane. N-linked (GlcNAc...) asparagine glycans are attached at residues asparagine 169, asparagine 172, asparagine 182, and asparagine 188. Helical transmembrane passes span 218–238 (VRLP…LCLI), 247–267 (VVYF…VRGV), 292–312 (VWGD…GGLI), 339–359 (SVYA…HLGV), 382–402 (LLPI…LLGL), 438–458 (VAGF…WLLL), 462–482 (YAAS…IMYI), 502–522 (LFFQ…ILIF), and 542–562 (VAIG…YALF). Residues 563–638 (QLCRTDGDTL…GSSRLQDSRI (76 aa)) lie on the Cytoplasmic side of the membrane. A Phosphothreonine modification is found at threonine 603. Serine 605 and serine 630 each carry phosphoserine. The essential for interaction with EXOC1 stretch occupies residues 627–638 (SNGSSRLQDSRI).

This sequence belongs to the sodium:neurotransmitter symporter (SNF) (TC 2.A.22) family. SLC6A9 subfamily. As to quaternary structure, interacts with EXOC1; interaction increases the transporter capacity of SLC6A9 probably by promoting its insertion into the cell membrane. Interacts with EXOC3 and EXOC4. In terms of tissue distribution, found only in the white matter of the CNS. As to expression, found in the gray matter of CNS as well as in macrophages and mast cells in peripheral tissues.

The protein resides in the cell membrane. It carries out the reaction glycine(out) + chloride(out) + 2 Na(+)(out) = glycine(in) + chloride(in) + 2 Na(+)(in). With respect to regulation, inhibited by sarcosine. Functionally, sodium- and chloride-dependent glycine transporter. Essential for regulating glycine concentrations at inhibitory glycinergic synapses. The chain is Sodium- and chloride-dependent glycine transporter 1 (Slc6a9) from Rattus norvegicus (Rat).